Reading from the N-terminus, the 161-residue chain is Ribosome maturation factor RimP (161 aa).

The protein belongs to the RimP family.

The protein resides in the cytoplasm. Functionally, required for maturation of 30S ribosomal subunits. In Rickettsia conorii (strain ATCC VR-613 / Malish 7), this protein is Ribosome maturation factor RimP.